The following is a 298-amino-acid chain: ATP phosphoribosyltransferase (298 aa).

The protein belongs to the ATP phosphoribosyltransferase family. Long subfamily. It depends on Mg(2+) as a cofactor.

It is found in the cytoplasm. The catalysed reaction is 1-(5-phospho-beta-D-ribosyl)-ATP + diphosphate = 5-phospho-alpha-D-ribose 1-diphosphate + ATP. It participates in amino-acid biosynthesis; L-histidine biosynthesis; L-histidine from 5-phospho-alpha-D-ribose 1-diphosphate: step 1/9. Feedback inhibited by histidine. Catalyzes the condensation of ATP and 5-phosphoribose 1-diphosphate to form N'-(5'-phosphoribosyl)-ATP (PR-ATP). Has a crucial role in the pathway because the rate of histidine biosynthesis seems to be controlled primarily by regulation of HisG enzymatic activity. This is ATP phosphoribosyltransferase from Aliivibrio fischeri (strain ATCC 700601 / ES114) (Vibrio fischeri).